A 589-amino-acid chain; its full sequence is Protein PAF1 homolog (589 aa).

Over residues Met1–His54 the composition is skewed to pro residues. 2 disordered regions span residues Met1–Thr180 and Gly542–Glu589. The segment covering Ala55–Gln65 has biased composition (low complexity). Pro residues predominate over residues Ala71–Asp87. Basic and acidic residues predominate over residues Pro88–Ser116. Over residues Lys117–Ser127 the composition is skewed to basic residues. Positions His126–Asn159 form a coiled coil. Residues Lys128–Arg154 show a composition bias toward basic and acidic residues.

It belongs to the PAF1 family. In terms of assembly, component of the nuclear PAF1 complex (PAF1C), which consists of VIP2/ELF7/PAF1, VIP3/SKI8/WDR61, VIP4/LEO1, VIP5/RTF1, VIP6/ELF8/CTR9 and CDC73. Expressed in roots, leaves and shoot apex.

It localises to the nucleus. Its function is as follows. Component of the PAF1 complex (PAF1C) which is involved in histone modifications such as methylation on histone H3 'Lys-4' (H3K4me3). Involved in regulation of flowering time. Required for the expression of the flowering repressors and MAD-box genes FLC, AGL27/FLM and AGL31/MAF2. Required for histone H3 trimethylation on 'Lys-4' H3K4me3 at the FLC and AGL27/FLM loci. Involved in the control of seed dormancy and germination. The protein is Protein PAF1 homolog of Arabidopsis thaliana (Mouse-ear cress).